Here is an 891-residue protein sequence, read N- to C-terminus: Protein translocase subunit SecA 1 (891 aa).

ATP-binding positions include Gln-86, 104-108 (GEGKT), and Asp-493. Basic and acidic residues predominate over residues 845-873 (KQVAKPIEASHGDGNRKKAPVVKEKEAGR). Residues 845–891 (KQVAKPIEASHGDGNRKKAPVVKEKEAGRNDPCPCGSGKKYKKCCGE) are disordered. Zn(2+)-binding residues include Cys-877, Cys-879, Cys-888, and Cys-889.

It belongs to the SecA family. In terms of assembly, monomer and homodimer. Part of the essential Sec protein translocation apparatus which comprises SecA, SecYEG and auxiliary proteins SecDF. Other proteins may also be involved. Zn(2+) is required as a cofactor.

Its subcellular location is the cell membrane. It is found in the cytoplasm. It catalyses the reaction ATP + H2O + cellular proteinSide 1 = ADP + phosphate + cellular proteinSide 2.. In terms of biological role, part of the Sec protein translocase complex. Interacts with the SecYEG preprotein conducting channel. Has a central role in coupling the hydrolysis of ATP to the transfer of proteins into and across the cell membrane, serving as an ATP-driven molecular motor driving the stepwise translocation of polypeptide chains across the membrane. The chain is Protein translocase subunit SecA 1 from Alkaliphilus metalliredigens (strain QYMF).